Reading from the N-terminus, the 162-residue chain is NADH-quinone oxidoreductase subunit I (162 aa).

2 consecutive 4Fe-4S ferredoxin-type domains span residues 52 to 82 and 93 to 122; these read LRRY…IEAG and TRYD…EGPN. Positions 62, 65, 68, 72, 102, 105, 108, and 112 each coordinate [4Fe-4S] cluster.

This sequence belongs to the complex I 23 kDa subunit family. As to quaternary structure, NDH-1 is composed of 14 different subunits. Subunits NuoA, H, J, K, L, M, N constitute the membrane sector of the complex. [4Fe-4S] cluster is required as a cofactor.

Its subcellular location is the cell inner membrane. The enzyme catalyses a quinone + NADH + 5 H(+)(in) = a quinol + NAD(+) + 4 H(+)(out). Functionally, NDH-1 shuttles electrons from NADH, via FMN and iron-sulfur (Fe-S) centers, to quinones in the respiratory chain. The immediate electron acceptor for the enzyme in this species is believed to be ubiquinone. Couples the redox reaction to proton translocation (for every two electrons transferred, four hydrogen ions are translocated across the cytoplasmic membrane), and thus conserves the redox energy in a proton gradient. This Methylocella silvestris (strain DSM 15510 / CIP 108128 / LMG 27833 / NCIMB 13906 / BL2) protein is NADH-quinone oxidoreductase subunit I.